The primary structure comprises 158 residues: SsrA-binding protein (158 aa).

The protein belongs to the SmpB family.

It is found in the cytoplasm. Functionally, required for rescue of stalled ribosomes mediated by trans-translation. Binds to transfer-messenger RNA (tmRNA), required for stable association of tmRNA with ribosomes. tmRNA and SmpB together mimic tRNA shape, replacing the anticodon stem-loop with SmpB. tmRNA is encoded by the ssrA gene; the 2 termini fold to resemble tRNA(Ala) and it encodes a 'tag peptide', a short internal open reading frame. During trans-translation Ala-aminoacylated tmRNA acts like a tRNA, entering the A-site of stalled ribosomes, displacing the stalled mRNA. The ribosome then switches to translate the ORF on the tmRNA; the nascent peptide is terminated with the 'tag peptide' encoded by the tmRNA and targeted for degradation. The ribosome is freed to recommence translation, which seems to be the essential function of trans-translation. This is SsrA-binding protein from Symbiobacterium thermophilum (strain DSM 24528 / JCM 14929 / IAM 14863 / T).